Consider the following 358-residue polypeptide: DNA integrity scanning protein DisA (358 aa).

Residues 6–144 form the DAC domain; the sequence is RPTLREAVAR…RGERHVLTDS (139 aa). Residues G73, L91, and 104–108 contribute to the ATP site; that span reads TRHRS.

Belongs to the DisA family. As to quaternary structure, homooctamer. The cofactor is Mg(2+).

It carries out the reaction 2 ATP = 3',3'-c-di-AMP + 2 diphosphate. Functionally, participates in a DNA-damage check-point. DisA forms globular foci that rapidly scan along the chromosomes searching for lesions. In terms of biological role, also has diadenylate cyclase activity, catalyzing the condensation of 2 ATP molecules into cyclic di-AMP (c-di-AMP). c-di-AMP likely acts as a signaling molecule that may couple DNA integrity with a cellular process. The sequence is that of DNA integrity scanning protein DisA from Mycobacterium bovis (strain ATCC BAA-935 / AF2122/97).